The primary structure comprises 350 residues: Neutral protease 2 homolog SNOG_10522 (350 aa).

The signal sequence occupies residues 1 to 18 (MKVSSQLAVAALASFATA). Residues 19–180 (ASVDVHKRET…AKALNKRTAI (162 aa)) constitute a propeptide that is removed on maturation. 2 disulfide bridges follow: cysteine 184-cysteine 251 and cysteine 258-cysteine 276. Histidine 301 contributes to the Zn(2+) binding site. Glutamate 302 is a catalytic residue. Positions 305 and 316 each coordinate Zn(2+).

Belongs to the peptidase M35 family. It depends on Zn(2+) as a cofactor.

It is found in the secreted. The catalysed reaction is Preferential cleavage of bonds with hydrophobic residues in P1'. Also 3-Asn-|-Gln-4 and 8-Gly-|-Ser-9 bonds in insulin B chain.. Its function is as follows. Secreted metalloproteinase that allows assimilation of proteinaceous substrates. Shows high activities on basic nuclear substrates such as histone and protamine. In Phaeosphaeria nodorum (strain SN15 / ATCC MYA-4574 / FGSC 10173) (Glume blotch fungus), this protein is Neutral protease 2 homolog SNOG_10522.